A 255-amino-acid polypeptide reads, in one-letter code: Imidazole glycerol phosphate synthase subunit HisF (255 aa).

Residues aspartate 11 and aspartate 130 contribute to the active site.

The protein belongs to the HisA/HisF family. Heterodimer of HisH and HisF.

The protein localises to the cytoplasm. The catalysed reaction is 5-[(5-phospho-1-deoxy-D-ribulos-1-ylimino)methylamino]-1-(5-phospho-beta-D-ribosyl)imidazole-4-carboxamide + L-glutamine = D-erythro-1-(imidazol-4-yl)glycerol 3-phosphate + 5-amino-1-(5-phospho-beta-D-ribosyl)imidazole-4-carboxamide + L-glutamate + H(+). Its pathway is amino-acid biosynthesis; L-histidine biosynthesis; L-histidine from 5-phospho-alpha-D-ribose 1-diphosphate: step 5/9. In terms of biological role, IGPS catalyzes the conversion of PRFAR and glutamine to IGP, AICAR and glutamate. The HisF subunit catalyzes the cyclization activity that produces IGP and AICAR from PRFAR using the ammonia provided by the HisH subunit. The protein is Imidazole glycerol phosphate synthase subunit HisF of Akkermansia muciniphila (strain ATCC BAA-835 / DSM 22959 / JCM 33894 / BCRC 81048 / CCUG 64013 / CIP 107961 / Muc).